Here is a 326-residue protein sequence, read N- to C-terminus: MLTFARQQQRRNVRWLLSLSLLVLLATLLSLCAGEQWIAPGDWLSARGELFVWQIRLPRTLAVLLVGAALALSGAVMQALFENPLAEPGLLGVSNGAGVGLIAAVLLGQGQLPGWALGLCAIAGALIITLILLRFARRHLSTSRLLLAGVALGIICSALMTWAIYFSTSFDLRQLMYWMMGGFGGVDWQQSWLMIALIPVLIWICCQSQPLNMLALGETSARQLGLPLWLWRNLLVIATGWMVGVSVAMAGAIGFIGLVIPHILRLCGLTDHRVLLPGCALAGAIALLLADVVARLALASAELPIGVVTATLGAPVFIWLLLKSAR.

9 helical membrane passes run 17–39 (LSLSLLVLLATLLSLCAGEQWIA), 59–81 (RTLAVLLVGAALALSGAVMQALF), 88–107 (PGLLGVSNGAGVGLIAAVLL), 111–133 (QLPGWALGLCAIAGALIITLILL), 146–168 (LLAGVALGIICSALMTWAIYFST), 188–205 (WQQSWLMIALIPVLIWIC), 242–264 (MVGVSVAMAGAIGFIGLVIPHIL), 274–296 (VLLPGCALAGAIALLLADVVARL), and 303–322 (LPIGVVTATLGAPVFIWLLL).

It belongs to the binding-protein-dependent transport system permease family. FecCD subfamily. In terms of assembly, the complex is composed of two ATP-binding proteins (BtuD), two transmembrane proteins (BtuC) and a solute-binding protein (BtuF).

The protein resides in the cell inner membrane. Its function is as follows. Part of the ABC transporter complex BtuCDF involved in vitamin B12 import. Involved in the translocation of the substrate across the membrane. The chain is Vitamin B12 import system permease protein BtuC from Salmonella typhi.